Reading from the N-terminus, the 74-residue chain is Alpha-conotoxin GeXIVA (74 aa).

A signal peptide spans 1-22 (MKLTCVLIITVLFLTACQLTTA). A propeptide spanning residues 23 to 46 (VTYSRGEHKHRALMSTGTNYRLPK) is cleaved from the precursor. The tract at residues 56 to 64 (RSPYDRRRR) is interacts with alpha-9-alpha-10 (CHRNA9-CHRNA10) nAChR.

This sequence belongs to the conotoxin O1 superfamily. Post-translationally, the native disulfide bond pairing has not been studied. Three isomers may exist: the bead isomer (I-II; III-IV), the globular isomer (I-III; II-IV), the ribbon isomer (I-IV; II-III). They have all been synthesized and their activity tested. All of them show similar potency on alpha-9-alpha-10 (CHRNA9-CHRNA10) nAChR, showing that disulfide bonds does not significantly affect their activity. In addition, removal of disulfide bonds does not affect the activity on alpha-9-alpha-10 (CHRNA9-CHRNA10) nAChR either. In terms of tissue distribution, expressed by the venom duct.

The protein localises to the secreted. Functionally, alpha-conotoxins act on postsynaptic membranes, they bind to the nicotinic acetylcholine receptors (nAChR) and thus inhibit them. This toxin is very potent on alpha-9-alpha-10/CHRNA9-CHRNA10 nAChR (IC(50)=4.61-12 nM for the bead isomer (I-II; III-IV), IC(50)=7-16 nM for the ribbon isomer (I-IV; II-III) and IC(50)=22.7 nM for the globular isomer (I-III; II-IV)). The bead isomer also shows a weak inhibition on other nAChRs (alpha-1-beta-1-delta-epsilon/CHRNA1-CHRNB1-CHRND-CHRNE, alpha-7/CHRNA7, alpha-6/alpha-3-beta-2-beta-3 (CHRNA6/CHRNA3-CHRNB2-CHRNB3), alpha-3-beta-2/CHRNA3-CHRNB2, alpha-2-beta-2/CHRNA2-CHRNB2, alpha-6/alpha-3-beta-4 (CHRNA6/CHRNA3-CHRNB4), alpha-4-beta-2/CHRNA4-CHRNB2, alpha-4-beta-4/CHRNA4-CHRNB4, alpha-2-beta-4/CHRNA2-CHRNB4, alpha-3-beta-4/CHRNA3-CHRNB4). The toxin blockade is voltage-dependent, and its binding site does not overlap with the binding site of the competitive antagonist alpha-conotoxin RgIA. The toxin inhibits Sf9 cell growth. Both the bead and ribbon isomers relieve pain effects in the rat chronic constriction injury (CCI) model of neuropathic pain, and in the acute pain model of tail flick test, but have no effect on motor performance. The chain is Alpha-conotoxin GeXIVA from Conus generalis (General cone).